Reading from the N-terminus, the 492-residue chain is JmjC domain-containing histone demethylation protein 1 (492 aa).

A PHD-type; atypical zinc finger spans residues 4–72 (PNICQHCQLK…SYRCPNHKEG (69 aa)). Residues 254–409 (TAVRQNDLVD…THLKIVEIEK (156 aa)) form the JmjC domain. Threonine 302 contacts substrate. Fe cation is bound by residues histidine 305 and aspartate 307. A substrate-binding site is contributed by lysine 322. Histidine 377 contacts Fe cation.

The protein belongs to the JHDM1 histone demethylase family. Requires Fe(2+) as cofactor.

It localises to the nucleus. It carries out the reaction N(6),N(6)-dimethyl-L-lysyl(36)-[histone H3] + 2 2-oxoglutarate + 2 O2 = L-lysyl(36)-[histone H3] + 2 formaldehyde + 2 succinate + 2 CO2. Its function is as follows. Histone demethylase that specifically demethylates 'Lys-36' of histone H3, thereby playing a central role in histone code. Does not demethylate H3 'Lys-4' nor 'Lys-79'. In Saccharomyces cerevisiae (strain ATCC 204508 / S288c) (Baker's yeast), this protein is JmjC domain-containing histone demethylation protein 1 (JHD1).